Here is a 95-residue protein sequence, read N- to C-terminus: Aspartyl/glutamyl-tRNA(Asn/Gln) amidotransferase subunit C (95 aa).

Belongs to the GatC family. Heterotrimer of A, B and C subunits.

It catalyses the reaction L-glutamyl-tRNA(Gln) + L-glutamine + ATP + H2O = L-glutaminyl-tRNA(Gln) + L-glutamate + ADP + phosphate + H(+). The enzyme catalyses L-aspartyl-tRNA(Asn) + L-glutamine + ATP + H2O = L-asparaginyl-tRNA(Asn) + L-glutamate + ADP + phosphate + 2 H(+). Functionally, allows the formation of correctly charged Asn-tRNA(Asn) or Gln-tRNA(Gln) through the transamidation of misacylated Asp-tRNA(Asn) or Glu-tRNA(Gln) in organisms which lack either or both of asparaginyl-tRNA or glutaminyl-tRNA synthetases. The reaction takes place in the presence of glutamine and ATP through an activated phospho-Asp-tRNA(Asn) or phospho-Glu-tRNA(Gln). This chain is Aspartyl/glutamyl-tRNA(Asn/Gln) amidotransferase subunit C, found in Methylobacterium sp. (strain 4-46).